The sequence spans 149 residues: Putative pre-16S rRNA nuclease (149 aa).

This sequence belongs to the YqgF nuclease family.

It is found in the cytoplasm. Could be a nuclease involved in processing of the 5'-end of pre-16S rRNA. The sequence is that of Putative pre-16S rRNA nuclease from Burkholderia orbicola (strain MC0-3).